The sequence spans 339 residues: uncharacterized protein (339 aa).

Residues Ile54, Lys78, Asp101, Asn128, Tyr213, and Lys217 each contribute to the NADP(+) site. Tyr213 acts as the Proton donor in catalysis. Residue Lys217 is the Lowers pKa of active site Tyr of the active site.

Belongs to the short-chain dehydrogenases/reductases (SDR) family.

This is an uncharacterized protein from Schizosaccharomyces pombe (strain 972 / ATCC 24843) (Fission yeast).